A 154-amino-acid polypeptide reads, in one-letter code: UPF0756 membrane protein YtwI (154 aa).

4 helical membrane-spanning segments follow: residues 8–28 (FLILLLAIALIAKNQSLLFAV), 54–74 (WGVTIITIAVLVPIATGEIGF), 87–107 (WIALGAGIAVALIAKNGLTLL), and 117–137 (LVIGTILAVALFGGVAVGPLI).

It belongs to the UPF0756 family.

Its subcellular location is the cell membrane. The polypeptide is UPF0756 membrane protein YtwI (ytwI) (Bacillus subtilis (strain 168)).